The sequence spans 487 residues: E3 ubiquitin-protein ligase RNF8 (487 aa).

In terms of domain architecture, FHA spans 38-92; sequence VTIGRGFSVTYQLISKVCPLMISRNHCVLKQNPEGQWTIMDNKSLNGVWLNRERL. Positions 68–72 are required for interaction with PIWIL1; the sequence is QNPEG. The disordered stretch occupies residues 135–195; it reads CLAPKNDHTT…PEKLHGKGEA (61 aa). S157 is subject to Phosphoserine. Basic and acidic residues predominate over residues 184-193; that stretch reads AEPEKLHGKG. An RING-type zinc finger spans residues 405-443; that stretch reads CIICSEYFIEAVTLNCAHSFCSFCISEWMKRKVECPICR.

This sequence belongs to the RNF8 family. As to quaternary structure, homodimer. Forms a E2-E3 ubiquitin ligase complex composed of the RNF8 homodimer and a E2 heterodimer of UBE2N and UBE2V2. Interacts with class III E2s, including UBE2E1, UBE2E2, and UBE2E3 and with UBE2N. Interacts with RXRA. Interacts (via FHA domain) with phosphorylated HERC2 (via C-terminus). Interacts with PIWIL1; leading to sequester RNF8 in the cytoplasm. Interacts with WRAP53/TCAB1. In terms of processing, autoubiquitinated through 'Lys-48' and 'Lys-63' of ubiquitin. 'Lys-63' polyubiquitination is mediated by UBE2N. 'Lys-29'-type polyubiquitination is also observed, but it doesn't require its own functional RING-type zinc finger.

Its subcellular location is the nucleus. It localises to the cytoplasm. The protein localises to the midbody. The protein resides in the chromosome. It is found in the telomere. It catalyses the reaction S-ubiquitinyl-[E2 ubiquitin-conjugating enzyme]-L-cysteine + [acceptor protein]-L-lysine = [E2 ubiquitin-conjugating enzyme]-L-cysteine + N(6)-ubiquitinyl-[acceptor protein]-L-lysine.. The protein operates within protein modification; protein ubiquitination. In terms of biological role, E3 ubiquitin-protein ligase that plays a key role in DNA damage signaling via 2 distinct roles: by mediating the 'Lys-63'-linked ubiquitination of histones H2A and H2AX and promoting the recruitment of DNA repair proteins at double-strand breaks (DSBs) sites, and by catalyzing 'Lys-48'-linked ubiquitination to remove target proteins from DNA damage sites. Following DNA DSBs, it is recruited to the sites of damage by ATM-phosphorylated MDC1 and catalyzes the 'Lys-63'-linked ubiquitination of histones H2A and H2AX, thereby promoting the formation of TP53BP1 and BRCA1 ionizing radiation-induced foci (IRIF). Also controls the recruitment of UIMC1-BRCC3 (RAP80-BRCC36) and PAXIP1/PTIP to DNA damage sites. Promotes the recruitment of NBN to DNA damage sites by catalyzing 'Lys-6'-linked ubiquitination of NBN. Also recruited at DNA interstrand cross-links (ICLs) sites and catalyzes 'Lys-63'-linked ubiquitination of histones H2A and H2AX, leading to recruitment of FAAP20 and Fanconi anemia (FA) complex, followed by interstrand cross-link repair. H2A ubiquitination also mediates the ATM-dependent transcriptional silencing at regions flanking DSBs in cis, a mechanism to avoid collision between transcription and repair intermediates. Promotes the formation of 'Lys-63'-linked polyubiquitin chains via interactions with the specific ubiquitin-conjugating UBE2N/UBC13 and ubiquitinates non-histone substrates such as PCNA. Substrates that are polyubiquitinated at 'Lys-63' are usually not targeted for degradation. Also catalyzes the formation of 'Lys-48'-linked polyubiquitin chains via interaction with the ubiquitin-conjugating UBE2L6/UBCH8, leading to degradation of substrate proteins such as CHEK2, JMJD2A/KDM4A and KU80/XRCC5: it is still unclear how the preference toward 'Lys-48'- versus 'Lys-63'-linked ubiquitination is regulated but it could be due to RNF8 ability to interact with specific E2 specific ligases. For instance, interaction with phosphorylated HERC2 promotes the association between RNF8 and UBE2N/UBC13 and favors the specific formation of 'Lys-63'-linked ubiquitin chains. Promotes non-homologous end joining (NHEJ) by promoting the 'Lys-48'-linked ubiquitination and degradation the of KU80/XRCC5. Following DNA damage, mediates the ubiquitination and degradation of JMJD2A/KDM4A in collaboration with RNF168, leading to unmask H4K20me2 mark and promote the recruitment of TP53BP1 at DNA damage sites. Following DNA damage, mediates the ubiquitination and degradation of POLD4/p12, a subunit of DNA polymerase delta. In the absence of POLD4, DNA polymerase delta complex exhibits higher proofreading activity. In addition to its function in damage signaling, also plays a role in higher-order chromatin structure by mediating extensive chromatin decondensation. Involved in the activation of ATM by promoting histone H2B ubiquitination, which indirectly triggers histone H4 'Lys-16' acetylation (H4K16ac), establishing a chromatin environment that promotes efficient activation of ATM kinase. Required in the testis, where it plays a role in the replacement of histones during spermatogenesis. At uncapped telomeres, promotes the joining of deprotected chromosome ends by inducing H2A ubiquitination and TP53BP1 recruitment, suggesting that it may enhance cancer development by aggravating telomere-induced genome instability in case of telomeric crisis. Promotes the assembly of RAD51 at DNA DSBs in the absence of BRCA1 and TP53BP1 Also involved in class switch recombination in immune system, via its role in regulation of DSBs repair. May be required for proper exit from mitosis after spindle checkpoint activation and may regulate cytokinesis. May play a role in the regulation of RXRA-mediated transcriptional activity. Not involved in RXRA ubiquitination by UBE2E2. In Rattus norvegicus (Rat), this protein is E3 ubiquitin-protein ligase RNF8.